Here is a 182-residue protein sequence, read N- to C-terminus: Large ribosomal subunit protein bL19m (182 aa).

The transit peptide at 1-21 directs the protein to the mitochondrion; that stretch reads MFNAKHFFNLGLGFQWLQKRG.

This sequence belongs to the bacterial ribosomal protein bL19 family. As to quaternary structure, component of the mitochondrial large ribosomal subunit (mt-LSU). Mature yeast 74S mitochondrial ribosomes consist of a small (37S) and a large (54S) subunit. The 37S small subunit contains a 15S ribosomal RNA (15S mt-rRNA) and at least 32 different proteins. The 54S large subunit contains a 21S rRNA (21S mt-rRNA) and at least 45 different proteins.

The protein localises to the mitochondrion. In terms of biological role, component of the mitochondrial ribosome (mitoribosome), a dedicated translation machinery responsible for the synthesis of mitochondrial genome-encoded proteins, including at least some of the essential transmembrane subunits of the mitochondrial respiratory chain. The mitoribosomes are attached to the mitochondrial inner membrane and translation products are cotranslationally integrated into the membrane. bL19m is essential for respiration. The sequence is that of Large ribosomal subunit protein bL19m (img1) from Schizosaccharomyces pombe (strain 972 / ATCC 24843) (Fission yeast).